Here is a 151-residue protein sequence, read N- to C-terminus: Potassium/proton antiporter CemA (151 aa).

The next 2 helical transmembrane spans lie at 7–27 and 107–127; these read LPSL…SSSF and ILHF…FFLG.

This sequence belongs to the CemA family.

The protein resides in the plastid. It localises to the chloroplast inner membrane. The enzyme catalyses K(+)(in) + H(+)(out) = K(+)(out) + H(+)(in). Functionally, contributes to K(+)/H(+) antiport activity by supporting proton efflux to control proton extrusion and homeostasis in chloroplasts in a light-dependent manner to modulate photosynthesis. Prevents excessive induction of non-photochemical quenching (NPQ) under continuous-light conditions. Indirectly promotes efficient inorganic carbon uptake into chloroplasts. This Aegilops crassa (Persian goatgrass) protein is Potassium/proton antiporter CemA.